Reading from the N-terminus, the 242-residue chain is Phosphoribosylaminoimidazole-succinocarboxamide synthase (242 aa).

This sequence belongs to the SAICAR synthetase family.

The catalysed reaction is 5-amino-1-(5-phospho-D-ribosyl)imidazole-4-carboxylate + L-aspartate + ATP = (2S)-2-[5-amino-1-(5-phospho-beta-D-ribosyl)imidazole-4-carboxamido]succinate + ADP + phosphate + 2 H(+). It functions in the pathway purine metabolism; IMP biosynthesis via de novo pathway; 5-amino-1-(5-phospho-D-ribosyl)imidazole-4-carboxamide from 5-amino-1-(5-phospho-D-ribosyl)imidazole-4-carboxylate: step 1/2. The chain is Phosphoribosylaminoimidazole-succinocarboxamide synthase from Ehrlichia chaffeensis (strain ATCC CRL-10679 / Arkansas).